We begin with the raw amino-acid sequence, 178 residues long: Large ribosomal subunit protein uL6 (178 aa).

The protein belongs to the universal ribosomal protein uL6 family. In terms of assembly, part of the 50S ribosomal subunit.

This protein binds to the 23S rRNA, and is important in its secondary structure. It is located near the subunit interface in the base of the L7/L12 stalk, and near the tRNA binding site of the peptidyltransferase center. This Streptococcus pneumoniae (strain 70585) protein is Large ribosomal subunit protein uL6.